Reading from the N-terminus, the 162-residue chain is Proepiregulin (162 aa).

An N-terminal signal peptide occupies residues 1 to 22; the sequence is METFPAAWVLALLCLGSHLLQA. Residues 23–55 constitute a propeptide that is removed on maturation; the sequence is VISTTVIPSCIPEESEDNCTALVQMEDDPRVAQ. N-linked (GlcNAc...) asparagine glycosylation occurs at asparagine 40. The EGF-like domain maps to 57 to 97; the sequence is LITKCSSDMDGYCLHGHCIYLVDMSEKYCRCEVGYTGLRCE. 3 disulfide bridges follow: cysteine 61–cysteine 74, cysteine 69–cysteine 85, and cysteine 87–cysteine 96. Residues 102 to 162 constitute a propeptide, removed in mature form; it reads TVHQPLSREY…TSGGPGLPQV (61 aa). Residues 113–133 traverse the membrane as a helical segment; sequence ALTVILVFLFLIVTAGSMYYF.

Interacts with EGFR and ERBB4.

Its subcellular location is the secreted. It is found in the extracellular space. It localises to the cell membrane. Ligand of the EGF receptor/EGFR and ERBB4. Stimulates EGFR and ERBB4 tyrosine phosphorylation. Contributes to inflammation, wound healing, tissue repair, and oocyte maturation by regulating angiogenesis and vascular remodeling and by stimulating cell proliferation. This is Proepiregulin (Ereg) from Rattus norvegicus (Rat).